The sequence spans 92 residues: Small ribosomal subunit protein uS19c (92 aa).

The protein belongs to the universal ribosomal protein uS19 family.

It localises to the plastid. The protein localises to the chloroplast. Functionally, protein S19 forms a complex with S13 that binds strongly to the 16S ribosomal RNA. The chain is Small ribosomal subunit protein uS19c from Piper cenocladum (Ant piper).